The chain runs to 828 residues: DNA gyrase subunit A (828 aa).

The Topo IIA-type catalytic domain maps to 32 to 497 (LPDVRDGLKP…EVLSLEDEDL (466 aa)). The O-(5'-phospho-DNA)-tyrosine intermediate role is filled by Y120. A GyrA-box motif is present at residues 524–530 (QKRGGRG).

This sequence belongs to the type II topoisomerase GyrA/ParC subunit family. Heterotetramer, composed of two GyrA and two GyrB chains. In the heterotetramer, GyrA contains the active site tyrosine that forms a transient covalent intermediate with DNA, while GyrB binds cofactors and catalyzes ATP hydrolysis.

The protein localises to the cytoplasm. The enzyme catalyses ATP-dependent breakage, passage and rejoining of double-stranded DNA.. A type II topoisomerase that negatively supercoils closed circular double-stranded (ds) DNA in an ATP-dependent manner to modulate DNA topology and maintain chromosomes in an underwound state. Negative supercoiling favors strand separation, and DNA replication, transcription, recombination and repair, all of which involve strand separation. Also able to catalyze the interconversion of other topological isomers of dsDNA rings, including catenanes and knotted rings. Type II topoisomerases break and join 2 DNA strands simultaneously in an ATP-dependent manner. The sequence is that of DNA gyrase subunit A from Streptococcus pyogenes serotype M6 (strain ATCC BAA-946 / MGAS10394).